Here is a 360-residue protein sequence, read N- to C-terminus: Phospho-N-acetylmuramoyl-pentapeptide-transferase (360 aa).

A run of 10 helical transmembrane segments spans residues 25-45, 73-93, 97-117, 132-152, 168-188, 199-219, 236-256, 263-283, 288-308, and 338-358; these read RGIL…PWMI, TMGG…WADL, YVWV…VDDY, WKYF…YMTA, VSIP…VGSS, GLAI…CYLS, AGEL…FLWF, VFMG…IAVI, VVLF…IIQV, and VIVR…ATLK.

It belongs to the glycosyltransferase 4 family. MraY subfamily. It depends on Mg(2+) as a cofactor.

The protein localises to the cell inner membrane. It catalyses the reaction UDP-N-acetyl-alpha-D-muramoyl-L-alanyl-gamma-D-glutamyl-meso-2,6-diaminopimeloyl-D-alanyl-D-alanine + di-trans,octa-cis-undecaprenyl phosphate = di-trans,octa-cis-undecaprenyl diphospho-N-acetyl-alpha-D-muramoyl-L-alanyl-D-glutamyl-meso-2,6-diaminopimeloyl-D-alanyl-D-alanine + UMP. It functions in the pathway cell wall biogenesis; peptidoglycan biosynthesis. Functionally, catalyzes the initial step of the lipid cycle reactions in the biosynthesis of the cell wall peptidoglycan: transfers peptidoglycan precursor phospho-MurNAc-pentapeptide from UDP-MurNAc-pentapeptide onto the lipid carrier undecaprenyl phosphate, yielding undecaprenyl-pyrophosphoryl-MurNAc-pentapeptide, known as lipid I. This Ectopseudomonas mendocina (strain ymp) (Pseudomonas mendocina) protein is Phospho-N-acetylmuramoyl-pentapeptide-transferase.